Reading from the N-terminus, the 338-residue chain is Heat-inducible transcription repressor HrcA (338 aa).

Belongs to the HrcA family.

In terms of biological role, negative regulator of class I heat shock genes (grpE-dnaK-dnaJ and groELS operons). Prevents heat-shock induction of these operons. In Bacillus cereus (strain 03BB102), this protein is Heat-inducible transcription repressor HrcA.